The chain runs to 90 residues: U7-theraphotoxin-Hhn1l (90 aa).

The N-terminal stretch at 1 to 19 is a signal peptide; the sequence is MKTAIFTVVLALAVFAVLS. Positions 20-50 are excised as a propeptide; it reads FGWEANEKALSEEFTELIHEKEAASETEARE. Cystine bridges form between Cys-51-Cys-65, Cys-58-Cys-70, and Cys-64-Cys-81.

It belongs to the neurotoxin 10 (Hwtx-1) family. 13 (Hntx-13) subfamily. Expressed by the venom gland.

Its subcellular location is the secreted. Functionally, ion channel inhibitor. This is U7-theraphotoxin-Hhn1l from Cyriopagopus hainanus (Chinese bird spider).